Consider the following 697-residue polypeptide: Phosphoribosylformylglycinamidine synthase subunit PurL (697 aa).

Residue H34 is part of the active site. Y37 and K76 together coordinate ATP. Position 78 (E78) interacts with Mg(2+). Substrate-binding positions include 79–82 (SHNH) and R101. H80 functions as the Proton acceptor in the catalytic mechanism. D102 contributes to the Mg(2+) binding site. Substrate is bound at residue Q224. D250 serves as a coordination point for Mg(2+). Substrate is bound at residue 294-296 (ETQ). D472 and G509 together coordinate ATP. Residue S512 coordinates substrate.

Belongs to the FGAMS family. Monomer. Part of the FGAM synthase complex composed of 1 PurL, 1 PurQ and 2 PurS subunits.

It localises to the cytoplasm. The enzyme catalyses N(2)-formyl-N(1)-(5-phospho-beta-D-ribosyl)glycinamide + L-glutamine + ATP + H2O = 2-formamido-N(1)-(5-O-phospho-beta-D-ribosyl)acetamidine + L-glutamate + ADP + phosphate + H(+). It participates in purine metabolism; IMP biosynthesis via de novo pathway; 5-amino-1-(5-phospho-D-ribosyl)imidazole from N(2)-formyl-N(1)-(5-phospho-D-ribosyl)glycinamide: step 1/2. Functionally, part of the phosphoribosylformylglycinamidine synthase complex involved in the purines biosynthetic pathway. Catalyzes the ATP-dependent conversion of formylglycinamide ribonucleotide (FGAR) and glutamine to yield formylglycinamidine ribonucleotide (FGAM) and glutamate. The FGAM synthase complex is composed of three subunits. PurQ produces an ammonia molecule by converting glutamine to glutamate. PurL transfers the ammonia molecule to FGAR to form FGAM in an ATP-dependent manner. PurS interacts with PurQ and PurL and is thought to assist in the transfer of the ammonia molecule from PurQ to PurL. The chain is Phosphoribosylformylglycinamidine synthase subunit PurL from Pyrobaculum aerophilum (strain ATCC 51768 / DSM 7523 / JCM 9630 / CIP 104966 / NBRC 100827 / IM2).